The sequence spans 365 residues: tRNA(Met) cytidine acetate ligase (365 aa).

ATP is bound by residues 7–20 (IAEF…HKYL), Gly96, Asn152, and Arg175.

The protein belongs to the TmcAL family.

It localises to the cytoplasm. It carries out the reaction cytidine(34) in elongator tRNA(Met) + acetate + ATP = N(4)-acetylcytidine(34) in elongator tRNA(Met) + AMP + diphosphate. Catalyzes the formation of N(4)-acetylcytidine (ac(4)C) at the wobble position of elongator tRNA(Met), using acetate and ATP as substrates. First activates an acetate ion to form acetyladenylate (Ac-AMP) and then transfers the acetyl group to tRNA to form ac(4)C34. The protein is tRNA(Met) cytidine acetate ligase of Streptococcus pneumoniae (strain 70585).